The primary structure comprises 138 residues: Cysteine desulfuration protein SufE (138 aa).

Residue Cys-51 is the Cysteine persulfide intermediate of the active site.

The protein belongs to the SufE family. As to quaternary structure, homodimer. Interacts with SufS.

Its subcellular location is the cytoplasm. The protein operates within cofactor biosynthesis; iron-sulfur cluster biosynthesis. In terms of biological role, participates in cysteine desulfuration mediated by SufS. Cysteine desulfuration mobilizes sulfur from L-cysteine to yield L-alanine and constitutes an essential step in sulfur metabolism for biosynthesis of a variety of sulfur-containing biomolecules. Functions as a sulfur acceptor for SufS, by mediating the direct transfer of the sulfur atom from the S-sulfanylcysteine of SufS, an intermediate product of cysteine desulfuration process. This chain is Cysteine desulfuration protein SufE, found in Salmonella agona (strain SL483).